Reading from the N-terminus, the 94-residue chain is Small ribosomal subunit protein uS19 (94 aa).

This sequence belongs to the universal ribosomal protein uS19 family.

In terms of biological role, protein S19 forms a complex with S13 that binds strongly to the 16S ribosomal RNA. The protein is Small ribosomal subunit protein uS19 of Halothermothrix orenii (strain H 168 / OCM 544 / DSM 9562).